The following is a 1167-amino-acid chain: DNA-directed RNA polymerase subunit beta (1167 aa).

Belongs to the RNA polymerase beta chain family. In terms of assembly, the RNAP catalytic core consists of 2 alpha, 1 beta, 1 beta' and 1 omega subunit. When a sigma factor is associated with the core the holoenzyme is formed, which can initiate transcription.

It carries out the reaction RNA(n) + a ribonucleoside 5'-triphosphate = RNA(n+1) + diphosphate. Its function is as follows. DNA-dependent RNA polymerase catalyzes the transcription of DNA into RNA using the four ribonucleoside triphosphates as substrates. This chain is DNA-directed RNA polymerase subunit beta, found in Mycolicibacterium vanbaalenii (strain DSM 7251 / JCM 13017 / BCRC 16820 / KCTC 9966 / NRRL B-24157 / PYR-1) (Mycobacterium vanbaalenii).